The primary structure comprises 264 residues: Movement protein (264 aa).

The interval 211 to 264 is disordered; it reads RTKSSKRGPKNNNNLGKGRSGGRPKPKSVDEVEEEFDNLIEDEAETSVADSDSY. The segment covering 241 to 255 has biased composition (acidic residues); it reads EVEEEFDNLIEDEAE.

Belongs to the tobamovirus movement protein family. In terms of assembly, binds to host RBCS at the plasmodesmata; this interaction seems required for viral systemic movement. In resistant plants, interacts with host MBP2C at host microtubules; this interaction prevents virus cell to cell movement. In resistant plants, interacts with host resistance (R) protein (e.g. tomato ToMV resistance protein TM-2(2), AC Q71BG9) at the host plasma membrane; this interaction triggers host defense responses leading to programmed cell death.

Its subcellular location is the host cytoplasm. The protein resides in the host cytoskeleton. It localises to the host cell junction. The protein localises to the host plasmodesma. Its function is as follows. Transports viral genome to neighboring plant cells directly through plasmosdesmata, without any budding. The movement protein allows efficient cell to cell propagation, by bypassing the host cell wall barrier. Forms a ribonucleoprotein complex with viral RNA. Binds microtubules and modulates microtubule stability. Can bind double-stranded DNA. Triggers host hypersensitive defense reaction in incompatible plants harboring resistance (R) proteins. This chain is Movement protein (MP), found in Antirrhinum majus (Garden snapdragon).